The primary structure comprises 78 residues: Large ribosomal subunit protein bL28 (78 aa).

This sequence belongs to the bacterial ribosomal protein bL28 family.

This is Large ribosomal subunit protein bL28 from Trichodesmium erythraeum (strain IMS101).